The following is a 117-amino-acid chain: Large ribosomal subunit protein bL20 (117 aa).

It belongs to the bacterial ribosomal protein bL20 family.

In terms of biological role, binds directly to 23S ribosomal RNA and is necessary for the in vitro assembly process of the 50S ribosomal subunit. It is not involved in the protein synthesizing functions of that subunit. The polypeptide is Large ribosomal subunit protein bL20 (Pelotomaculum thermopropionicum (strain DSM 13744 / JCM 10971 / SI)).